Reading from the N-terminus, the 355-residue chain is UDP-N-acetylglucosamine--N-acetylmuramyl-(pentapeptide) pyrophosphoryl-undecaprenol N-acetylglucosamine transferase (355 aa).

UDP-N-acetyl-alpha-D-glucosamine is bound by residues 15-17 (TGG), asparagine 127, arginine 163, serine 191, isoleucine 244, 263-268 (ALTVSE), and glutamine 288.

The protein belongs to the glycosyltransferase 28 family. MurG subfamily.

Its subcellular location is the cell inner membrane. It catalyses the reaction di-trans,octa-cis-undecaprenyl diphospho-N-acetyl-alpha-D-muramoyl-L-alanyl-D-glutamyl-meso-2,6-diaminopimeloyl-D-alanyl-D-alanine + UDP-N-acetyl-alpha-D-glucosamine = di-trans,octa-cis-undecaprenyl diphospho-[N-acetyl-alpha-D-glucosaminyl-(1-&gt;4)]-N-acetyl-alpha-D-muramoyl-L-alanyl-D-glutamyl-meso-2,6-diaminopimeloyl-D-alanyl-D-alanine + UDP + H(+). Its pathway is cell wall biogenesis; peptidoglycan biosynthesis. Cell wall formation. Catalyzes the transfer of a GlcNAc subunit on undecaprenyl-pyrophosphoryl-MurNAc-pentapeptide (lipid intermediate I) to form undecaprenyl-pyrophosphoryl-MurNAc-(pentapeptide)GlcNAc (lipid intermediate II). The sequence is that of UDP-N-acetylglucosamine--N-acetylmuramyl-(pentapeptide) pyrophosphoryl-undecaprenol N-acetylglucosamine transferase from Citrobacter koseri (strain ATCC BAA-895 / CDC 4225-83 / SGSC4696).